The chain runs to 257 residues: Phosphatidylglycerol--prolipoprotein diacylglyceryl transferase (257 aa).

The next 7 helical transmembrane spans lie at 13–33 (IGPI…AIGG), 49–69 (FLLN…RLMF), 88–108 (IYEG…AGLY), 123–143 (FAVL…IFNQ), 152–172 (FAFG…ILLI), 185–202 (GYQF…RGLI), and 223–243 (IGFF…AYWM). Arginine 136 provides a ligand contact to a 1,2-diacyl-sn-glycero-3-phospho-(1'-sn-glycerol).

The protein belongs to the Lgt family.

The protein resides in the cell membrane. It carries out the reaction L-cysteinyl-[prolipoprotein] + a 1,2-diacyl-sn-glycero-3-phospho-(1'-sn-glycerol) = an S-1,2-diacyl-sn-glyceryl-L-cysteinyl-[prolipoprotein] + sn-glycerol 1-phosphate + H(+). It participates in protein modification; lipoprotein biosynthesis (diacylglyceryl transfer). Catalyzes the transfer of the diacylglyceryl group from phosphatidylglycerol to the sulfhydryl group of the N-terminal cysteine of a prolipoprotein, the first step in the formation of mature lipoproteins. The protein is Phosphatidylglycerol--prolipoprotein diacylglyceryl transferase of Thermoanaerobacter pseudethanolicus (strain ATCC 33223 / 39E) (Clostridium thermohydrosulfuricum).